The following is a 678-amino-acid chain: Electrogenic aspartate/glutamate antiporter SLC25A12, mitochondrial (678 aa).

Ala-2 bears the N-acetylalanine mark. Residues 2–294 form a regulatory N-terminal domain region; the sequence is AVKVQTTKRG…TLADIERIAP (293 aa). Residues 2 to 329 are Mitochondrial intermembrane-facing; the sequence is AVKVQTTKRG…WLQIAESAYR (328 aa). Ca(2+) is bound by residues Asp-65, Thr-67, Asp-69, Leu-71, and Glu-76. EF-hand domains follow at residues 65–76, 86–121, 125–155, and 157–192; these read DQTKDGLISYQE, APDS…TIIH, PFNW…QFLQ, and LQLE…IRSH. Residues 295–310 are linker loop domain; the sequence is LAEGALPYNLAELQRQ. Residues 320-612 form a carrier domain region; the sequence is WLQIAESAYR…RWFYIDFGGL (293 aa). 3 Solcar repeats span residues 324 to 416, 424 to 508, and 516 to 604; these read AESA…VRDK, VPLP…CKLL, and VGGL…LQRW. Residues 330–347 traverse the membrane as a helical segment; that stretch reads FTLGSVAGAVGATAVYPI. The Mitochondrial matrix portion of the chain corresponds to 348-390; that stretch reads DLVKTRMQNQRGSGSVVGELMYKNSFDCFKKVLRYEGFFGLYR. A helical transmembrane segment spans residues 391–410; sequence GLIPQLIGVAPEKAIKLTVN. Residues 411-433 are Mitochondrial intermembrane-facing; it reads DFVRDKFTRRDGSVPLPAEVLAG. The chain crosses the membrane as a helical span at residues 434–447; that stretch reads GCAGGSQVIFTNPL. Topologically, residues 448 to 482 are mitochondrial matrix; that stretch reads EIVKIRLQVAGEITTGPRVSALNVLRDLGIFGLYK. Residues 483 to 502 form a helical membrane-spanning segment; the sequence is GAKACFLRDIPFSAIYFPVY. At 503–521 the chain is on the mitochondrial intermembrane side; sequence AHCKLLLADENGHVGGLNL. The chain crosses the membrane as a helical span at residues 522-539; that stretch reads LAAGAMAGVPAASLVTPA. The Mitochondrial matrix portion of the chain corresponds to 540 to 578; the sequence is DVIKTRLQVAARAGQTTYSGVIDCFRKILREEGPSAFWK. A helical transmembrane segment spans residues 579 to 598; that stretch reads GTAARVFRSSPQFGVTLVTY. The Mitochondrial intermembrane portion of the chain corresponds to 599-678; that stretch reads ELLQRWFYID…QPKAAVAATQ (80 aa). Residues 613 to 675 are C-terminal domain; that stretch reads KPAGSEPTPK…AVVQPKAAVA (63 aa).

The protein belongs to the mitochondrial carrier (TC 2.A.29) family. In terms of assembly, homodimer (via N-terminus). Expressed predominantly in the heart and skeletal muscle, weakly in brain and kidney.

It localises to the mitochondrion inner membrane. It carries out the reaction L-aspartate(in) + L-glutamate(out) + H(+)(out) = L-aspartate(out) + L-glutamate(in) + H(+)(in). It catalyses the reaction 3-sulfino-L-alanine(out) + L-glutamate(in) + H(+)(in) = 3-sulfino-L-alanine(in) + L-glutamate(out) + H(+)(out). The catalysed reaction is 3-sulfino-L-alanine(out) + L-aspartate(in) = 3-sulfino-L-alanine(in) + L-aspartate(out). With respect to regulation, activated by calcium-binding in the mitochondrial intermembrane space. Inhibited by pyridoxal 5'-phosphate, bathophenathroline, mercurials, diethyl pyrocarbonate and N-ethylmaleimide. Mitochondrial electrogenic aspartate/glutamate antiporter that favors efflux of aspartate and entry of glutamate and proton within the mitochondria as part of the malate-aspartate shuttle. Also mediates the uptake of L-cysteinesulfinate (3-sulfino-L-alanine) by mitochondria in exchange of L-glutamate and proton. Can also exchange L-cysteinesulfinate with aspartate in their anionic form without any proton translocation. Lacks transport activity towards L-glutamine or gamma-aminobutyric acid (GABA). This chain is Electrogenic aspartate/glutamate antiporter SLC25A12, mitochondrial, found in Homo sapiens (Human).